We begin with the raw amino-acid sequence, 357 residues long: Protein-glutamate methylesterase/protein-glutamine glutaminase (357 aa).

Residues 3 to 120 (RVLVVDDSAF…SLDLYKIKEQ (118 aa)) form the Response regulatory domain. The residue at position 54 (aspartate 54) is a 4-aspartylphosphate. One can recognise a CheB-type methylesterase domain in the interval 161–355 (PGTGRQIVCI…ASITSCVKKE (195 aa)). Active-site residues include serine 173, histidine 200, and aspartate 296.

It belongs to the CheB family. In terms of processing, phosphorylated by CheA. Phosphorylation of the N-terminal regulatory domain activates the methylesterase activity.

It localises to the cytoplasm. The catalysed reaction is [protein]-L-glutamate 5-O-methyl ester + H2O = L-glutamyl-[protein] + methanol + H(+). It catalyses the reaction L-glutaminyl-[protein] + H2O = L-glutamyl-[protein] + NH4(+). In terms of biological role, involved in the modulation of the chemotaxis system; catalyzes the demethylation of specific methylglutamate residues introduced into the chemoreceptors (methyl-accepting chemotaxis proteins) by CheR. B.subtilis has an effective methylation-independent adaptation system but must utilize the methylation system for adaptation to high concentrations of attractant. This Bacillus subtilis (strain 168) protein is Protein-glutamate methylesterase/protein-glutamine glutaminase.